Here is a 128-residue protein sequence, read N- to C-terminus: NADPH-dependent 7-cyano-7-deazaguanine reductase (128 aa).

Residue C34 is the Thioimide intermediate of the active site. D41 (proton donor) is an active-site residue. Residues 56 to 58 (IEL) and 75 to 76 (HE) each bind substrate.

This sequence belongs to the GTP cyclohydrolase I family. QueF type 1 subfamily.

It is found in the cytoplasm. It carries out the reaction 7-aminomethyl-7-carbaguanine + 2 NADP(+) = 7-cyano-7-deazaguanine + 2 NADPH + 3 H(+). It functions in the pathway tRNA modification; tRNA-queuosine biosynthesis. Functionally, catalyzes the NADPH-dependent reduction of 7-cyano-7-deazaguanine (preQ0) to 7-aminomethyl-7-deazaguanine (preQ1). This Ruthia magnifica subsp. Calyptogena magnifica protein is NADPH-dependent 7-cyano-7-deazaguanine reductase.